The following is a 212-amino-acid chain: Protein-L-isoaspartate O-methyltransferase (212 aa).

Ser60 is a catalytic residue.

This sequence belongs to the methyltransferase superfamily. L-isoaspartyl/D-aspartyl protein methyltransferase family.

The protein localises to the cytoplasm. It catalyses the reaction [protein]-L-isoaspartate + S-adenosyl-L-methionine = [protein]-L-isoaspartate alpha-methyl ester + S-adenosyl-L-homocysteine. Functionally, catalyzes the methyl esterification of L-isoaspartyl residues in peptides and proteins that result from spontaneous decomposition of normal L-aspartyl and L-asparaginyl residues. It plays a role in the repair and/or degradation of damaged proteins. In Pseudomonas entomophila (strain L48), this protein is Protein-L-isoaspartate O-methyltransferase.